The primary structure comprises 172 residues: Translation initiation factor IF-3 (172 aa).

The protein belongs to the IF-3 family. As to quaternary structure, monomer.

The protein resides in the cytoplasm. Functionally, IF-3 binds to the 30S ribosomal subunit and shifts the equilibrium between 70S ribosomes and their 50S and 30S subunits in favor of the free subunits, thus enhancing the availability of 30S subunits on which protein synthesis initiation begins. This chain is Translation initiation factor IF-3, found in Bartonella tribocorum (strain CIP 105476 / IBS 506).